A 170-amino-acid chain; its full sequence is Shikimate kinase (170 aa).

Residue 11-16 coordinates ATP; the sequence is LSGKST. Residue Ser-15 participates in Mg(2+) binding. Positions 33, 57, and 79 each coordinate substrate. Position 119 (Arg-119) interacts with ATP. Residue Arg-137 participates in substrate binding.

The protein belongs to the shikimate kinase family. Monomer. It depends on Mg(2+) as a cofactor.

The protein localises to the cytoplasm. The enzyme catalyses shikimate + ATP = 3-phosphoshikimate + ADP + H(+). The protein operates within metabolic intermediate biosynthesis; chorismate biosynthesis; chorismate from D-erythrose 4-phosphate and phosphoenolpyruvate: step 5/7. Functionally, catalyzes the specific phosphorylation of the 3-hydroxyl group of shikimic acid using ATP as a cosubstrate. In Clostridium botulinum (strain 657 / Type Ba4), this protein is Shikimate kinase.